We begin with the raw amino-acid sequence, 196 residues long: Somatotropin (196 aa).

The N-terminal stretch at 1 to 18 (MEKVVLLLSVLSLGVVCP) is a signal peptide. Gln19 is modified (pyrrolidone carboxylic acid). His35 serves as a coordination point for Zn(2+). A disulfide bridge connects residues Cys69 and Cys169. Residue Glu178 participates in Zn(2+) binding. Cysteines 186 and 194 form a disulfide.

The protein belongs to the somatotropin/prolactin family.

The protein resides in the secreted. In terms of biological role, growth hormone plays an important role in growth control and is involved in the regulation of several anabolic processes. Implicated as an osmoregulatory substance important for seawater adaptation. The chain is Somatotropin (gh) from Siganus guttatus (Orange-spotted spinefoot).